The sequence spans 351 residues: UDP-3-O-acylglucosamine N-acyltransferase (351 aa).

H240 functions as the Proton acceptor in the catalytic mechanism.

This sequence belongs to the transferase hexapeptide repeat family. LpxD subfamily. As to quaternary structure, homotrimer.

It catalyses the reaction a UDP-3-O-[(3R)-3-hydroxyacyl]-alpha-D-glucosamine + a (3R)-hydroxyacyl-[ACP] = a UDP-2-N,3-O-bis[(3R)-3-hydroxyacyl]-alpha-D-glucosamine + holo-[ACP] + H(+). It functions in the pathway bacterial outer membrane biogenesis; LPS lipid A biosynthesis. Functionally, catalyzes the N-acylation of UDP-3-O-acylglucosamine using 3-hydroxyacyl-ACP as the acyl donor. Is involved in the biosynthesis of lipid A, a phosphorylated glycolipid that anchors the lipopolysaccharide to the outer membrane of the cell. In Pseudomonas savastanoi pv. phaseolicola (strain 1448A / Race 6) (Pseudomonas syringae pv. phaseolicola (strain 1448A / Race 6)), this protein is UDP-3-O-acylglucosamine N-acyltransferase.